Consider the following 873-residue polypeptide: DNA helicase/primase complex-associated protein (873 aa).

A disordered region spans residues 394–422 (PPLPRDDGDGENNVVEVSSSTGGAHPPSD).

Belongs to the herpesviridae HEPA family. Associates with the primase and the helicase to form the helicase-primase complex. Interacts with the origin-binding protein. Interacts with the polymerase catalytic subunit.

It is found in the host nucleus. In terms of biological role, component of the helicase/primase complex. Unwinds the DNA at the replication forks and generates single-stranded DNA for both leading and lagging strand synthesis. The primase synthesizes short RNA primers on the lagging strand that the polymerase presumably elongates using dNTPs. The primase-associated factor has no known catalytic activity in the complex and may serve to facilitate the formation of the replisome by directly interacting with the origin-binding protein and the polymerase. This is DNA helicase/primase complex-associated protein (UL102) from Human cytomegalovirus (strain Merlin) (HHV-5).